The sequence spans 142 residues: Transcription antitermination protein NusB (142 aa).

It belongs to the NusB family.

In terms of biological role, involved in transcription antitermination. Required for transcription of ribosomal RNA (rRNA) genes. Binds specifically to the boxA antiterminator sequence of the ribosomal RNA (rrn) operons. The polypeptide is Transcription antitermination protein NusB (Buchnera aphidicola subsp. Cinara cedri (strain Cc)).